We begin with the raw amino-acid sequence, 160 residues long: Ribosomal RNA large subunit methyltransferase H (160 aa).

S-adenosyl-L-methionine-binding positions include leucine 76, glycine 108, and 127-132 (LGKMTW).

Belongs to the RNA methyltransferase RlmH family. Homodimer.

The protein localises to the cytoplasm. The catalysed reaction is pseudouridine(1915) in 23S rRNA + S-adenosyl-L-methionine = N(3)-methylpseudouridine(1915) in 23S rRNA + S-adenosyl-L-homocysteine + H(+). Specifically methylates the pseudouridine at position 1915 (m3Psi1915) in 23S rRNA. This Sinorhizobium fredii (strain NBRC 101917 / NGR234) protein is Ribosomal RNA large subunit methyltransferase H.